We begin with the raw amino-acid sequence, 234 residues long: MAKLTKRMRTIREKVEVTKDYEINEAIALLKELATAKFVESVDVAVNLGIDARKSDQNVRGATVLPNGTGRDVRVAVFTQGANAEAAKEAGAELVGMEDLAELVKKGEMNFDVVVASPDAMRVVGQLGQILGPRGLMPNPKTGTVTPNVAEAVKNAKAGQVRYRNDKNGIIHTTIGKVDFTAEQLQQNLESLIVALKKAKPSQAKGVYVKKVSISTTMGAGVAVDQNTLSTTVA.

The protein belongs to the universal ribosomal protein uL1 family. As to quaternary structure, part of the 50S ribosomal subunit.

Functionally, binds directly to 23S rRNA. The L1 stalk is quite mobile in the ribosome, and is involved in E site tRNA release. Its function is as follows. Protein L1 is also a translational repressor protein, it controls the translation of the L11 operon by binding to its mRNA. The chain is Large ribosomal subunit protein uL1 from Pseudoalteromonas translucida (strain TAC 125).